The primary structure comprises 165 residues: LOB domain-containing protein 3 (165 aa).

In terms of domain architecture, LOB spans 13–115 (SPCAGCKLLR…TQLAFAQAEL (103 aa)).

The protein belongs to the LOB domain-containing protein family. As to expression, expressed in young shoots, roots, stems, leaves and flowers. At the bases of lateral organs formed from vegetative, inflorescence, and floral meristems.

It localises to the nucleus. This is LOB domain-containing protein 3 (LBD3) from Arabidopsis thaliana (Mouse-ear cress).